Reading from the N-terminus, the 703-residue chain is Leucine zipper putative tumor suppressor 3 (703 aa).

Disordered stretches follow at residues 1-22 (MAPA…PHLF), 40-190 (RADP…SEPL), and 204-347 (FHSM…PPSP). The span at 96–107 (GSFPGPRSSGSG) shows a compositional bias: low complexity. Residues 109–124 (NRERPGPGRYPSEDKV) show a composition bias toward basic and acidic residues. Over residues 205 to 218 (HSMQNLCPPQTNGT) the composition is skewed to polar residues. Residues 251–268 (DSGRNSLTSLPTYSSSYS) show a composition bias toward low complexity. The span at 290–299 (SSGGGGGGSG) shows a compositional bias: gly residues. The span at 304-324 (GTSDSGRASSKSGSSSSMGRS) shows a compositional bias: low complexity. Gly residues predominate over residues 325–336 (GHLGSGEGGNGG). Phosphoserine occurs at positions 346 and 348. Coiled-coil stretches lie at residues 348-526 (SALI…SLRD) and 600-669 (TRAL…RLRE). Positions 665–703 (RRLRERGAAGGSRTPTPQHGEEEKAWTPSRLERIESTEI) are disordered. The span at 683 to 703 (HGEEEKAWTPSRLERIESTEI) shows a compositional bias: basic and acidic residues.

The protein belongs to the LZTS3 family. As to quaternary structure, interacts (via C-terminus) with SHANK3 (via PDZ domain). Interacts (via coiled coil) with SIPA1L1. Can form homooligomers. Detected in brain, with highest expression in brain cortex, caudate putamen, cerebellum and hippocampus. Detected in neuropil (at protein level). Detected in brain and kidney.

The protein resides in the synapse. The protein localises to the postsynaptic density. Its subcellular location is the cell projection. It localises to the dendritic spine. It is found in the dendrite. The protein resides in the cytoplasm. The protein localises to the cytoskeleton. Its function is as follows. May be involved in promoting the maturation of dendritic spines, probably via regulating SIPA1L1 levels at the postsynaptic density of synapses. The chain is Leucine zipper putative tumor suppressor 3 from Rattus norvegicus (Rat).